The sequence spans 440 residues: Protein CANDIDATE G-PROTEIN COUPLED RECEPTOR 7 (440 aa).

Positions 1-24 (MAKMPLSVVVFLLFSAAFLAVSMA) are cleaved as a signal peptide. Residues Asn124 and Asn162 are each glycosylated (N-linked (GlcNAc...) asparagine). The next 5 membrane-spanning stretches (helical) occupy residues 175–195 (LPTL…FWSY), 207–227 (IHLL…CAAE), 243–263 (ILFY…IILI), 281–301 (VLII…VIGE), and 315–335 (VFLL…VWSI). Asn351 carries an N-linked (GlcNAc...) asparagine glycan. 2 consecutive transmembrane segments (helical) span residues 363-383 (IVVI…KTIA) and 390-410 (VSFA…FHMF).

The protein belongs to the LU7TM family.

Its subcellular location is the membrane. Functionally, plays a role in plants and microbes interactions. G-protein coupled receptor involved in root growth mediated by the bacterial quorum-sensing signals N-acyl-homoserine lactones (AHLs). This Arabidopsis thaliana (Mouse-ear cress) protein is Protein CANDIDATE G-PROTEIN COUPLED RECEPTOR 7.